The primary structure comprises 406 residues: Imidazolonepropionase (406 aa).

Fe(3+)-binding residues include His-65 and His-67. Zn(2+) contacts are provided by His-65 and His-67. Residues Arg-74, Tyr-137, and His-170 each contribute to the 4-imidazolone-5-propanoate site. An N-formimidoyl-L-glutamate-binding site is contributed by Tyr-137. His-235 serves as a coordination point for Fe(3+). His-235 is a Zn(2+) binding site. Gln-238 contributes to the 4-imidazolone-5-propanoate binding site. Residue Asp-310 coordinates Fe(3+). Zn(2+) is bound at residue Asp-310. Residues Asn-312 and Gly-314 each contribute to the N-formimidoyl-L-glutamate site. Thr-315 provides a ligand contact to 4-imidazolone-5-propanoate.

The protein belongs to the metallo-dependent hydrolases superfamily. HutI family. It depends on Zn(2+) as a cofactor. Requires Fe(3+) as cofactor.

It localises to the cytoplasm. It carries out the reaction 4-imidazolone-5-propanoate + H2O = N-formimidoyl-L-glutamate. It participates in amino-acid degradation; L-histidine degradation into L-glutamate; N-formimidoyl-L-glutamate from L-histidine: step 3/3. In terms of biological role, catalyzes the hydrolytic cleavage of the carbon-nitrogen bond in imidazolone-5-propanoate to yield N-formimidoyl-L-glutamate. It is the third step in the universal histidine degradation pathway. This chain is Imidazolonepropionase, found in Vibrio vulnificus (strain YJ016).